Consider the following 285-residue polypeptide: Casein kinase II subunit beta-2 (285 aa).

Residues 226–285 (FKDAEDEAELDDDDEEEEEEEEEEEELAAMDEAEGAQQQHAAAAAGTATGGVAAGGEGVH) form a disordered region. The segment covering 229–259 (AEDEAELDDDDEEEEEEEEEEEELAAMDEAE) has biased composition (acidic residues). Residues 260–272 (GAQQQHAAAAAGT) show a composition bias toward low complexity. Residues 273–285 (ATGGVAAGGEGVH) show a composition bias toward gly residues.

This sequence belongs to the casein kinase 2 subunit beta family. In terms of assembly, tetramer composed of two alpha chains, one beta chain and one beta' chain. In terms of processing, phosphorylated by alpha subunit.

Its function is as follows. Regulatory subunit of casein kinase II/CK2. As part of the kinase complex regulates the basal catalytic activity of the alpha subunit a constitutively active serine/threonine-protein kinase that phosphorylates a large number of substrates containing acidic residues C-terminal to the phosphorylated serine or threonine. The sequence is that of Casein kinase II subunit beta-2 (ckb-2) from Neurospora crassa (strain ATCC 24698 / 74-OR23-1A / CBS 708.71 / DSM 1257 / FGSC 987).